Here is a 78-residue protein sequence, read N- to C-terminus: Esculentin-2ISa (78 aa).

The N-terminal stretch at 1-22 (MFTLKKSLLLLFFLGTISLSVC) is a signal peptide. A propeptide spans 23–39 (KQERDADYEDKGEVEEV) (removed in mature form). A disulfide bridge links Cys-72 with Cys-78.

As to expression, expressed by the skin glands.

The protein localises to the secreted. In terms of biological role, has antimicrobial activity against Gram-negative bacterium E.coli ATCC 8739 (MIC=12.5 ug), against Gram positive bacteria S.aureus ATCC 6538 (MIC=3.1 ug), methicillin-resistant S.aureus ATCC 43300 (MIC=25 ug), B.subtilis ATCC 6633 (MIC=6.3 ug) and against fungus C.albicans ATCC 90028 (MIC=100 ug). In Odorrana ishikawae (Ishikawa's frog), this protein is Esculentin-2ISa.